A 196-amino-acid polypeptide reads, in one-letter code: Putative archaetidylserine decarboxylase proenzyme (196 aa).

Residue Ser-164 is the Schiff-base intermediate with substrate; via pyruvic acid of the active site. The residue at position 164 (Ser-164) is a Pyruvic acid (Ser); by autocatalysis.

Belongs to the phosphatidylserine decarboxylase family. PSD-A subfamily. In terms of assembly, heterodimer of a large membrane-associated beta subunit and a small pyruvoyl-containing alpha subunit. Pyruvate serves as cofactor. Is synthesized initially as an inactive proenzyme. Formation of the active enzyme involves a self-maturation process in which the active site pyruvoyl group is generated from an internal serine residue via an autocatalytic post-translational modification. Two non-identical subunits are generated from the proenzyme in this reaction, and the pyruvate is formed at the N-terminus of the alpha chain, which is derived from the carboxyl end of the proenzyme. The post-translation cleavage follows an unusual pathway, termed non-hydrolytic serinolysis, in which the side chain hydroxyl group of the serine supplies its oxygen atom to form the C-terminus of the beta chain, while the remainder of the serine residue undergoes an oxidative deamination to produce ammonia and the pyruvoyl prosthetic group on the alpha chain.

It localises to the cell membrane. It catalyses the reaction archaetidylserine + H(+) = archaetidylethanolamine + CO2. Functionally, catalyzes the formation of archaetidylethanolamine (PtdEtn) from archaetidylserine (PtdSer). The polypeptide is Putative archaetidylserine decarboxylase proenzyme (Halobacterium salinarum (strain ATCC 700922 / JCM 11081 / NRC-1) (Halobacterium halobium)).